Here is a 244-residue protein sequence, read N- to C-terminus: Uridylate kinase (244 aa).

Residue 11 to 14 (KLSG) participates in ATP binding. An involved in allosteric activation by GTP region spans residues 19–24 (GSLGYG). Residue G53 coordinates UMP. Positions 54 and 58 each coordinate ATP. Residues D73 and 134–141 (SGNPFFTT) contribute to the UMP site. Residues T161, Y167, and D170 each contribute to the ATP site.

Belongs to the UMP kinase family. In terms of assembly, homohexamer.

It localises to the cytoplasm. It carries out the reaction UMP + ATP = UDP + ADP. It functions in the pathway pyrimidine metabolism; CTP biosynthesis via de novo pathway; UDP from UMP (UMPK route): step 1/1. Its activity is regulated as follows. Allosterically activated by GTP. Inhibited by UTP. Functionally, catalyzes the reversible phosphorylation of UMP to UDP. The sequence is that of Uridylate kinase from Trichodesmium erythraeum (strain IMS101).